Consider the following 292-residue polypeptide: Phosphoribulokinase, chromosomal (292 aa).

12–20 is an ATP binding site; sequence GSSGAGTTS.

This sequence belongs to the phosphoribulokinase family. In terms of assembly, homooctamer.

The enzyme catalyses D-ribulose 5-phosphate + ATP = D-ribulose 1,5-bisphosphate + ADP + H(+). Its pathway is carbohydrate biosynthesis; Calvin cycle. The polypeptide is Phosphoribulokinase, chromosomal (cfxP) (Cupriavidus necator (strain ATCC 17699 / DSM 428 / KCTC 22496 / NCIMB 10442 / H16 / Stanier 337) (Ralstonia eutropha)).